A 283-amino-acid chain; its full sequence is Urease accessory protein UreD 1 (283 aa).

This sequence belongs to the UreD family. As to quaternary structure, ureD, UreF and UreG form a complex that acts as a GTP-hydrolysis-dependent molecular chaperone, activating the urease apoprotein by helping to assemble the nickel containing metallocenter of UreC. The UreE protein probably delivers the nickel.

It is found in the cytoplasm. Functionally, required for maturation of urease via the functional incorporation of the urease nickel metallocenter. The sequence is that of Urease accessory protein UreD 1 from Brucella anthropi (strain ATCC 49188 / DSM 6882 / CCUG 24695 / JCM 21032 / LMG 3331 / NBRC 15819 / NCTC 12168 / Alc 37) (Ochrobactrum anthropi).